The chain runs to 154 residues: Hemiasterlin resistant protein 1 (154 aa).

2 disordered regions span residues 1-64 (MVRR…PGLM) and 86-109 (GMFT…PAGA). Composition is skewed to low complexity over residues 7-28 (ASPS…SSFA), 48-57 (TPMGAPMGAP), and 96-109 (AEQA…PAGA). The CHCH domain occupies 116 to 154 (SQPCEFEWRQFVDCAQNQSDVSLCNGFNDIFKQCKARYA). Short sequence motifs (cx9C motif) lie at residues 119-129 (CEFEWRQFVDC) and 139-149 (CNGFNDIFKQC). Intrachain disulfides connect cysteine 119-cysteine 149 and cysteine 129-cysteine 139.

This Caenorhabditis elegans protein is Hemiasterlin resistant protein 1 (har-1).